We begin with the raw amino-acid sequence, 277 residues long: Large ribosomal subunit protein uL2 (277 aa).

Positions 222 to 277 (GVTMNPVDHPHGGGEGRTSGGRHPVTPWGKPTKGKKTRSNKSTNKFILISRHKRKK) are disordered.

It belongs to the universal ribosomal protein uL2 family. In terms of assembly, part of the 50S ribosomal subunit. Forms a bridge to the 30S subunit in the 70S ribosome.

Its function is as follows. One of the primary rRNA binding proteins. Required for association of the 30S and 50S subunits to form the 70S ribosome, for tRNA binding and peptide bond formation. It has been suggested to have peptidyltransferase activity; this is somewhat controversial. Makes several contacts with the 16S rRNA in the 70S ribosome. The sequence is that of Large ribosomal subunit protein uL2 from Rhodopseudomonas palustris (strain BisB18).